The chain runs to 400 residues: Enoyl-[acyl-carrier-protein] reductase [NADH] (400 aa).

Residues 48–53 (GSSSGY), 74–75 (FE), 111–112 (DA), and 139–140 (LA) each bind NAD(+). Substrate is bound at residue Tyr225. The active-site Proton donor is Tyr235. Residues Lys244 and 273–275 (VVT) each bind NAD(+).

It belongs to the TER reductase family. As to quaternary structure, monomer.

The catalysed reaction is a 2,3-saturated acyl-[ACP] + NAD(+) = a (2E)-enoyl-[ACP] + NADH + H(+). The protein operates within lipid metabolism; fatty acid biosynthesis. Involved in the final reduction of the elongation cycle of fatty acid synthesis (FAS II). Catalyzes the reduction of a carbon-carbon double bond in an enoyl moiety that is covalently linked to an acyl carrier protein (ACP). This Shewanella piezotolerans (strain WP3 / JCM 13877) protein is Enoyl-[acyl-carrier-protein] reductase [NADH].